The sequence spans 308 residues: MRPEGSLTYWVPERLRQGFCGVGRAAQALVCASAKEGTAFRMEAVQEGAAGVESEQAALGEEAVLLLDDIMAEVEVVAEEEGLVERREEAQRAQQAVPGPGPMTPESALEELLAVQVELEPVNAQARKAFSRQREKMERRRKPHLDRRGAVIQSVPGFWANVIANHPQMSALITDEDEDMLSYMVSLEVEEEKHPVHLCKIMLFFRSNPYFQNKVITKEYLVNITEYRASHSTPIEWYLDYEVEAYRRRHHNSSLNFFNWFSDHNFAGSNKIAEILCKDLWRNPLQYYKRMKPPEEGTETSGDSQLLS.

Belongs to the nucleosome assembly protein (NAP) family.

Its subcellular location is the cytoplasm. The protein localises to the nucleus. Functionally, may be involved in sperm differentiation and proliferation. The polypeptide is Testis-specific Y-encoded protein 8 (TSPY8) (Homo sapiens (Human)).